The following is a 182-amino-acid chain: Glycerol-3-phosphate acyltransferase 1 (182 aa).

The next 5 membrane-spanning stretches (helical) occupy residues 5-25 (MQFL…AYIV), 54-74 (GYFV…VSIA), 81-101 (STFL…PILF), 117-137 (IAFD…FYLI), and 157-177 (ILYS…VLIL).

This sequence belongs to the PlsY family. As to quaternary structure, probably interacts with PlsX.

It localises to the cell membrane. It carries out the reaction an acyl phosphate + sn-glycerol 3-phosphate = a 1-acyl-sn-glycero-3-phosphate + phosphate. Its pathway is lipid metabolism; phospholipid metabolism. Catalyzes the transfer of an acyl group from acyl-phosphate (acyl-PO(4)) to glycerol-3-phosphate (G3P) to form lysophosphatidic acid (LPA). This enzyme utilizes acyl-phosphate as fatty acyl donor, but not acyl-CoA or acyl-ACP. In Bacillus thuringiensis subsp. konkukian (strain 97-27), this protein is Glycerol-3-phosphate acyltransferase 1.